A 416-amino-acid chain; its full sequence is Peptide chain release factor subunit 1 (416 aa).

Belongs to the eukaryotic release factor 1 family. As to quaternary structure, heterodimer of two subunits, one of which binds GTP.

The protein localises to the cytoplasm. Functionally, directs the termination of nascent peptide synthesis (translation) in response to the termination codons UAA, UAG and UGA. This Haloquadratum walsbyi (strain DSM 16790 / HBSQ001) protein is Peptide chain release factor subunit 1.